A 328-amino-acid polypeptide reads, in one-letter code: Probable tRNA-dihydrouridine synthase (328 aa).

18 to 20 (PME) is a binding site for FMN. Cys-105 serves as the catalytic Proton donor. Residues Lys-143, 208–210 (NGD), and 232–233 (GR) contribute to the FMN site.

The protein belongs to the Dus family. It depends on FMN as a cofactor.

The enzyme catalyses a 5,6-dihydrouridine in tRNA + NAD(+) = a uridine in tRNA + NADH + H(+). It catalyses the reaction a 5,6-dihydrouridine in tRNA + NADP(+) = a uridine in tRNA + NADPH + H(+). Its function is as follows. Catalyzes the synthesis of 5,6-dihydrouridine (D), a modified base found in the D-loop of most tRNAs, via the reduction of the C5-C6 double bond in target uridines. This Staphylococcus aureus (strain Mu50 / ATCC 700699) protein is Probable tRNA-dihydrouridine synthase (dus).